Here is a 433-residue protein sequence, read N- to C-terminus: G2/mitotic-specific cyclin-B1 (433 aa).

The segment at 19 to 47 (INMAGAKRVPTAPAATSKPGLRPRTALGD) is disordered. Lysine 73 bears the N6-acetyllysine mark. The segment at 93 to 116 (PVSEPVPEPEPEPEPEPVKEEKLS) is disordered. Serine 126 carries the phosphoserine; by CDK1 modification. Serine 128 is modified (phosphoserine). Serine 133 bears the Phosphoserine; by PLK1 mark. Serine 147 is modified (phosphoserine). 2 interaction with CDK2 regions span residues 169–177 (EYVKDIYAY) and 258–261 (YEEM). Threonine 321 carries the post-translational modification Phosphothreonine.

Belongs to the cyclin family. Cyclin AB subfamily. As to quaternary structure, interacts with the CDC2 protein kinase to form a serine/threonine kinase holoenzyme complex also known as maturation promoting factor (MPF). The cyclin subunit imparts substrate specificity to the complex. Binds HEI10. Interacts with catalytically active RALBP1 and CDC2 during mitosis to form an endocytotic complex during interphase. Interacts with CCNF; interaction is required for nuclear localization. Interacts with CDK5RAP3. Interacts with RFPL4A and UBE2A. Interacts with INCA1. In terms of processing, ubiquitinated by the SCF(NIPA) complex during interphase, leading to its destruction. Deubiquitinated by USP22 during G2/M phase. Phosphorylated by PLK1 at Ser-133 on centrosomes during prophase: phosphorylation by PLK1 does not cause nuclear import. Phosphorylation at Ser-147 was also reported to be mediated by PLK1 but Ser-133 seems to be the primary phosphorylation site.

Its subcellular location is the cytoplasm. The protein resides in the nucleus. It localises to the cytoskeleton. It is found in the microtubule organizing center. The protein localises to the centrosome. Essential for the control of the cell cycle at the G2/M (mitosis) transition. The sequence is that of G2/mitotic-specific cyclin-B1 (CCNB1) from Homo sapiens (Human).